A 157-amino-acid chain; its full sequence is SsrA-binding protein (157 aa).

This sequence belongs to the SmpB family.

It localises to the cytoplasm. Its function is as follows. Required for rescue of stalled ribosomes mediated by trans-translation. Binds to transfer-messenger RNA (tmRNA), required for stable association of tmRNA with ribosomes. tmRNA and SmpB together mimic tRNA shape, replacing the anticodon stem-loop with SmpB. tmRNA is encoded by the ssrA gene; the 2 termini fold to resemble tRNA(Ala) and it encodes a 'tag peptide', a short internal open reading frame. During trans-translation Ala-aminoacylated tmRNA acts like a tRNA, entering the A-site of stalled ribosomes, displacing the stalled mRNA. The ribosome then switches to translate the ORF on the tmRNA; the nascent peptide is terminated with the 'tag peptide' encoded by the tmRNA and targeted for degradation. The ribosome is freed to recommence translation, which seems to be the essential function of trans-translation. The chain is SsrA-binding protein from Aquifex aeolicus (strain VF5).